Consider the following 1111-residue polypeptide: Atrial natriuretic peptide-converting enzyme (1111 aa).

The Cytoplasmic portion of the chain corresponds to 1–112; that stretch reads MGRVSFNVRV…QKLVTANLLR (112 aa). Residues 93–96 carry the DDNN motif motif; that stretch reads ADSS. Residues 113 to 133 traverse the membrane as a helical; Signal-anchor for type II membrane protein segment; that stretch reads FLLLVLIPCICALIVLLAILL. Topologically, residues 134 to 1111 are extracellular; sequence SFVGTLKKVY…QTFLQKKSQG (978 aa). Residue Asn147 is glycosylated (N-linked (GlcNAc...) asparagine). An FZ 1 domain is found at 199–325; that stretch reads GNTSTCVNIT…SDASRICFSL (127 aa). Cystine bridges form between Cys204–Cys264, Cys212–Cys257, Cys248–Cys288, Cys277–Cys322, Cys281–Cys305, Cys335–Cys348, Cys343–Cys361, Cys355–Cys370, Cys372–Cys384, Cys379–Cys397, Cys391–Cys406, Cys408–Cys421, Cys416–Cys434, Cys428–Cys443, Cys445–Cys458, Cys453–Cys471, Cys465–Cys480, Cys521–Cys584, Cys529–Cys577, Cys568–Cys606, Cys595–Cys636, Cys599–Cys623, Cys646–Cys658, Cys653–Cys671, Cys665–Cys680, Cys682–Cys696, Cys690–Cys709, Cys703–Cys718, Cys721–Cys733, Cys728–Cys746, and Cys740–Cys755. N-linked (GlcNAc...) asparagine glycosylation occurs at Asn296. 4 LDL-receptor class A domains span residues 334–371, 371–407, 407–444, and 444–481; these read LCGG…AHCN, NCSE…QNCD, DCNL…VNCS, and SCPS…ENCS. Asn409 carries an N-linked (GlcNAc...) asparagine glycan. The 124-residue stretch at 516–639 folds into the FZ 2 domain; that stretch reads SNCSHCEPIT…SSDNQTCLLP (124 aa). N-linked (GlcNAc...) asparagine glycosylation is present at Asn535. 3 consecutive LDL-receptor class A domains span residues 645-681, 681-719, and 720-756; these read ECSP…ENCG, GCKE…KNCS, and FCQD…WGCV. In terms of domain architecture, SRCR spans 756–851; it reads VTLSKNGNSS…SGSEISLLCT (96 aa). Asn763 carries an N-linked (GlcNAc...) asparagine glycan. 4 cysteine pairs are disulfide-bonded: Cys855–Cys977, Cys893–Cys909, Cys991–Cys1056, and Cys1020–Cys1035. Residues 867 to 1100 enclose the Peptidase S1 domain; sequence ILGGRTSRPG…FVDWIERQIY (234 aa). Residues His908 and Asp957 each act as charge relay system in the active site. Residue Ser1050 is the Charge relay system of the active site.

The protein belongs to the peptidase S1 family. In terms of processing, N-glycosylated; required for processing and activation. Activated through proteolytic processing by a trypsin-like protease; cleaved into a N-terminal propeptide and an activated corin protease fragment. Atrial natriuretic peptide-converting enzyme, 180 kDa soluble fragment is produced by cleavage by ADAM10. Cleavage by ADAM10 to produce soluble 180 kDa soluble fragment takes place after the transmembrane region and before FZ 1. Post-translationally, a disulfide bond links the activated corin protease fragment and the N-terminal propeptide. The disulfide bond also links the activated corin protease fragment with Atrial natriuretic peptide-converting enzyme, 180 kDa soluble fragment. As to expression, specifically expressed in heart. Also detected in kidney, aorta, brain and testis. In kidney, present in epithelial cells, with segmental expression in the proximal tubule, thick ascending limb, connecting tubule, and throughout the collecting duct (at protein level).

The protein localises to the cell membrane. It is found in the cytoplasmic vesicle. Its subcellular location is the secreted. Its function is as follows. Serine-type endopeptidase involved in atrial natriuretic peptide (NPPA) processing. Converts through proteolytic cleavage the non-functional propeptide NPPA into the active hormone, thereby regulating blood pressure in heart and promoting natriuresis, diuresis and vasodilation. Proteolytic cleavage of pro-NPPA also plays a role in female pregnancy by promoting trophoblast invasion and spiral artery remodeling in uterus. Also acts as a regulator of sodium reabsorption in kidney. May also process pro-NPPB the B-type natriuretic peptide. This Rattus norvegicus (Rat) protein is Atrial natriuretic peptide-converting enzyme (Corin).